Reading from the N-terminus, the 202-residue chain is Transcriptional regulator SdrP (202 aa).

Residues 117-189 (QRLKNRMAAA…YGKIQLLDLK (73 aa)) form the HTH crp-type domain. The H-T-H motif DNA-binding region spans 149 to 168 (HDELAAAVGSVRETVTKVIG).

In terms of assembly, homodimer.

In terms of biological role, activates transcription. The consensus DNA-binding site of this transcriptional regulator is 5'-WWGTGAN(5-7)ACACWW-3' in which W is A or T and N is G, A, T or C. Regulated genes include those encoding proteins involved in nutrient and energy supply, redox control and polyadenylation of mRNA. Also regulates genes involved in oxidative stress response such as genes encoding manganese superoxide dismutase and catalase, and genes encoding a protein involved in nucleotide excision repair of damaged DNA and putative proteins involved in redox control, protein degradation and transcriptional regulation. This is Transcriptional regulator SdrP from Thermus thermophilus (strain ATCC 27634 / DSM 579 / HB8).